Consider the following 548-residue polypeptide: Probable malate:quinone oxidoreductase (548 aa).

Positions 521–548 (DKPQAADSTPKPQLKPQPVQKEVADIAL) are disordered. Over residues 530–541 (PKPQLKPQPVQK) the composition is skewed to low complexity.

This sequence belongs to the MQO family. It depends on FAD as a cofactor.

It carries out the reaction (S)-malate + a quinone = a quinol + oxaloacetate. The protein operates within carbohydrate metabolism; tricarboxylic acid cycle; oxaloacetate from (S)-malate (quinone route): step 1/1. This chain is Probable malate:quinone oxidoreductase, found in Shigella boydii serotype 4 (strain Sb227).